A 282-amino-acid polypeptide reads, in one-letter code: MLLSKKSEYKTLSTVEHPQYIVFCDFDETYFPHTIDEQKQQDIYELEDYLEQKSKDGELIIGWVTGSSIESILDKMGRGKFRYFPHFIASDLGTEITYFSEHNFGQQDNKWNSRINEGFSKEKVEKLVKQLHENHNILLNPQTQLGKSRYKHNFYYQEQDEINDKKNLLAIEKICEEYGVSVNINRCNPLAGDPEDSYDVDFIPIGTGKNEIVTFMLEKYNLNTERAIAFGDSGNDVRMLQTVGNGYLLKNATQEAKNLHNLITDSEYSKGITNTLKKLIGS.

The Nucleophile role is filled by Asp25. Positions 25 and 27 each coordinate Mg(2+). Residue Lys209 participates in phosphate binding. 2 residues coordinate Mg(2+): Asp232 and Ser233. Asn235 serves as a coordination point for phosphate.

The protein belongs to the HAD-like hydrolase superfamily. Cof family. In terms of assembly, homotetramer. Mg(2+) is required as a cofactor.

It catalyses the reaction D-kanosamine 6-phosphate + H2O = kanosamine + phosphate. It participates in antibiotic biosynthesis; kanosamine biosynthesis. Functionally, involved in the biosynthesis of kanosamine (3-amino-3-deoxy-D-glucose), which is known to have antibiotic and antifungal properties, and to be a precursor of the antibiotic neotrehalosadiamine (3,3'-diamino-3,3'-dideoxy-alpha,beta-trehalose (NTD)). Catalyzes the dephosphorylation of kanosamine 6-phosphate to yield kanosamine. There is a trace amount of activity using glucosamine-6-phosphate. This is Kanosamine-6-phosphate phosphatase (ntdB) from Bacillus subtilis (strain 168).